Consider the following 282-residue polypeptide: MPYPRKRFGQHWLKDPAVHEAILRAAQLNDLERGADPTWVLEIGPGTGQLTRRLLAQGVQVVAVEIDRDLCRLLRKRFADQPRFHLVEGDFLRLPLPPQPRLLVANIPYNLTGSILEKVLGSPAQPVRQFERIVLLVQKELAERLQAGPGSKAYGALSLRTQYLADCELICRVPPTAFKPAPKVESAVIRLTPRPAPTPVRDPCWFNHLLRQGFSTRRKKLVNALGSLVEREVVAAALAQLRLNPDARAEELDLPHWLALSDLLLEKAPKRAVVPQEEQEPG.

S-adenosyl-L-methionine contacts are provided by His11, Leu13, Gly44, Glu65, Asp90, and Asn106.

The protein belongs to the class I-like SAM-binding methyltransferase superfamily. rRNA adenine N(6)-methyltransferase family. RsmA subfamily.

It localises to the cytoplasm. The enzyme catalyses adenosine(1518)/adenosine(1519) in 16S rRNA + 4 S-adenosyl-L-methionine = N(6)-dimethyladenosine(1518)/N(6)-dimethyladenosine(1519) in 16S rRNA + 4 S-adenosyl-L-homocysteine + 4 H(+). Specifically dimethylates two adjacent adenosines (A1518 and A1519) in the loop of a conserved hairpin near the 3'-end of 16S rRNA in the 30S particle. May play a critical role in biogenesis of 30S subunits. This chain is Ribosomal RNA small subunit methyltransferase A, found in Synechococcus sp. (strain JA-2-3B'a(2-13)) (Cyanobacteria bacterium Yellowstone B-Prime).